The following is a 313-amino-acid chain: Ribonuclease HIII (313 aa).

The RNase H type-2 domain occupies tyrosine 98–lysine 313. A divalent metal cation-binding residues include aspartate 104, glutamate 105, and aspartate 208.

Belongs to the RNase HII family. RnhC subfamily. Requires Mn(2+) as cofactor. Mg(2+) is required as a cofactor.

It is found in the cytoplasm. It carries out the reaction Endonucleolytic cleavage to 5'-phosphomonoester.. Endonuclease that specifically degrades the RNA of RNA-DNA hybrids. This is Ribonuclease HIII from Macrococcus caseolyticus (strain JCSC5402) (Macrococcoides caseolyticum).